Here is a 116-residue protein sequence, read N- to C-terminus: MIVGVGIDVVDVARFLAALDRSPRLRDRLFTPEERDLVGGSLAARFAAKEAIAKALGAPGGMRWHDATVARVPGGAPAVSLRGTVLAVADGLGITSWHLSLSHDAGIASAIAVAER.

Mg(2+)-binding residues include aspartate 8 and glutamate 50.

This sequence belongs to the P-Pant transferase superfamily. AcpS family. Mg(2+) is required as a cofactor.

It is found in the cytoplasm. The enzyme catalyses apo-[ACP] + CoA = holo-[ACP] + adenosine 3',5'-bisphosphate + H(+). In terms of biological role, transfers the 4'-phosphopantetheine moiety from coenzyme A to a Ser of acyl-carrier-protein. The protein is Holo-[acyl-carrier-protein] synthase of Beutenbergia cavernae (strain ATCC BAA-8 / DSM 12333 / CCUG 43141 / JCM 11478 / NBRC 16432 / NCIMB 13614 / HKI 0122).